The chain runs to 156 residues: ATP synthase subunit b (156 aa).

Residues 7-29 (LFGQTIAFAIFVWFCMKFVWPPL) traverse the membrane as a helical segment.

The protein belongs to the ATPase B chain family. F-type ATPases have 2 components, F(1) - the catalytic core - and F(0) - the membrane proton channel. F(1) has five subunits: alpha(3), beta(3), gamma(1), delta(1), epsilon(1). F(0) has three main subunits: a(1), b(2) and c(10-14). The alpha and beta chains form an alternating ring which encloses part of the gamma chain. F(1) is attached to F(0) by a central stalk formed by the gamma and epsilon chains, while a peripheral stalk is formed by the delta and b chains.

Its subcellular location is the cell inner membrane. F(1)F(0) ATP synthase produces ATP from ADP in the presence of a proton or sodium gradient. F-type ATPases consist of two structural domains, F(1) containing the extramembraneous catalytic core and F(0) containing the membrane proton channel, linked together by a central stalk and a peripheral stalk. During catalysis, ATP synthesis in the catalytic domain of F(1) is coupled via a rotary mechanism of the central stalk subunits to proton translocation. Its function is as follows. Component of the F(0) channel, it forms part of the peripheral stalk, linking F(1) to F(0). The polypeptide is ATP synthase subunit b (Ectopseudomonas mendocina (strain ymp) (Pseudomonas mendocina)).